A 411-amino-acid polypeptide reads, in one-letter code: Phosphoribosylaminoimidazole-succinocarboxamide synthase, chloroplastic (411 aa).

Residues 1 to 53 (MAQCVRSTLNPVRTPQSFTRKAYVKSPAFASVSFLRAVPEFNKYPKPCSLVMS) constitute a chloroplast transit peptide.

Belongs to the SAICAR synthetase family.

It is found in the plastid. The protein localises to the chloroplast. It catalyses the reaction 5-amino-1-(5-phospho-D-ribosyl)imidazole-4-carboxylate + L-aspartate + ATP = (2S)-2-[5-amino-1-(5-phospho-beta-D-ribosyl)imidazole-4-carboxamido]succinate + ADP + phosphate + 2 H(+). It functions in the pathway purine metabolism; IMP biosynthesis via de novo pathway; 5-amino-1-(5-phospho-D-ribosyl)imidazole-4-carboxamide from 5-amino-1-(5-phospho-D-ribosyl)imidazole-4-carboxylate: step 1/2. This is Phosphoribosylaminoimidazole-succinocarboxamide synthase, chloroplastic (PUR7) from Arabidopsis thaliana (Mouse-ear cress).